Here is a 336-residue protein sequence, read N- to C-terminus: MPISTINDSISESSVHKSSIPTKVEMSQNEKYSEAPSEAPTIPPPPEQYAWSRIRENCQDAFSEFFGTFVLLLFGDGVVAQVVLSRGTKGDYQSISWGWGLGVMLGVYVGGKSGGHLNPAVTLANCLFRGHPWRKFPIYAVAQVLGAMAAAAVVYGNYKSAIDAYEGGPGIRTVIGENATAGVFCTYPAEFMTRTGMFFSEFIASTILQFVIFAMADSANIGAGPLMPLGLFFLIFGIGACFGWETGYAINLARDFGPRLVSYMLGYGSEVWSAGGYYFWIPMVAPFFGCAFGGFLYDVFIYTGPSPINTPGMGFGRLVSPRRSTWSNTYNANSPV.

The segment at 1–46 (MPISTINDSISESSVHKSSIPTKVEMSQNEKYSEAPSEAPTIPPPP) is disordered. The Cytoplasmic segment spans residues 1 to 64 (MPISTINDSI…RENCQDAFSE (64 aa)). Positions 9-19 (SISESSVHKSS) are enriched in low complexity. Residues 65 to 85 (FFGTFVLLLFGDGVVAQVVLS) form a helical membrane-spanning segment. At 86–94 (RGTKGDYQS) the chain is on the extracellular side. A helical transmembrane segment spans residues 95–115 (ISWGWGLGVMLGVYVGGKSGG). At 116-135 (HLNPAVTLANCLFRGHPWRK) the chain is on the cytoplasmic side. An NPA 1 motif is present at residues 118–120 (NPA). Residues 136–156 (FPIYAVAQVLGAMAAAAVVYG) traverse the membrane as a helical segment. At 157-195 (NYKSAIDAYEGGPGIRTVIGENATAGVFCTYPAEFMTRT) the chain is on the extracellular side. A glycan (N-linked (GlcNAc...) asparagine) is linked at Asn-178. The chain crosses the membrane as a helical span at residues 196-216 (GMFFSEFIASTILQFVIFAMA). Residues 217–223 (DSANIGA) lie on the Cytoplasmic side of the membrane. A helical transmembrane segment spans residues 224–244 (GPLMPLGLFFLIFGIGACFGW). Residues 245–280 (ETGYAINLARDFGPRLVSYMLGYGSEVWSAGGYYFW) are Extracellular-facing. The NPA 2 motif lies at 251–253 (NLA). The chain crosses the membrane as a helical span at residues 281–301 (IPMVAPFFGCAFGGFLYDVFI). At 302 to 336 (YTGPSPINTPGMGFGRLVSPRRSTWSNTYNANSPV) the chain is on the cytoplasmic side.

Belongs to the MIP/aquaporin (TC 1.A.8) family.

It localises to the membrane. The enzyme catalyses H2O(in) = H2O(out). It catalyses the reaction glycerol(in) = glycerol(out). In terms of biological role, probable water/glycerol channel that may have redundant functions with FgAQP4. The protein is Probable aquaglyceroporin-2 of Gibberella zeae (strain ATCC MYA-4620 / CBS 123657 / FGSC 9075 / NRRL 31084 / PH-1) (Wheat head blight fungus).